The primary structure comprises 415 residues: Esterase FrsA (415 aa).

The protein belongs to the FrsA family.

The enzyme catalyses a carboxylic ester + H2O = an alcohol + a carboxylate + H(+). Its function is as follows. Catalyzes the hydrolysis of esters. The chain is Esterase FrsA from Serratia proteamaculans (strain 568).